A 449-amino-acid polypeptide reads, in one-letter code: Glutamyl-tRNA reductase (449 aa).

Substrate is bound by residues 58–61 (TCNR), S121, 126–128 (ETQ), and Q132. Catalysis depends on C59, which acts as the Nucleophile. 203–208 (GLGEMA) contributes to the NADP(+) binding site.

The protein belongs to the glutamyl-tRNA reductase family. In terms of assembly, homodimer.

It carries out the reaction (S)-4-amino-5-oxopentanoate + tRNA(Glu) + NADP(+) = L-glutamyl-tRNA(Glu) + NADPH + H(+). It participates in porphyrin-containing compound metabolism; protoporphyrin-IX biosynthesis; 5-aminolevulinate from L-glutamyl-tRNA(Glu): step 1/2. Its function is as follows. Catalyzes the NADPH-dependent reduction of glutamyl-tRNA(Glu) to glutamate 1-semialdehyde (GSA). In Helicobacter pylori (strain ATCC 700392 / 26695) (Campylobacter pylori), this protein is Glutamyl-tRNA reductase.